The chain runs to 276 residues: MERRWVFVLLDVLCVLVASLPFIILTLVNAPYKRGFYCGDDSIRYPYRPDTITHGLMAGVIITATVILVSLGEAYLVYTDRLYSRSNFNNYVAAIYKVLGTFLFGAAVSQSLTDLAKYMIGRLRPSFLAVCDPDWSQVNCSGYVQLEVCRGSPANVTEARLSFYSGHSSFGMYCMLFLALYVQARLCWKWARLLRPTVQFFLVAFAIYVGYTRVSDHKHHWSDVLVGLLQGALVACLTVRYVSDFFKSRPPQPCQEDEVPERKPSLSLTLTLGDRP.

Residues 1-4 (MERR) are Cytoplasmic-facing. Residues 5–25 (WVFVLLDVLCVLVASLPFIIL) traverse the membrane as a helical segment. Topologically, residues 26–51 (TLVNAPYKRGFYCGDDSIRYPYRPDT) are lumenal. Residues 52-72 (ITHGLMAGVIITATVILVSLG) form a helical membrane-spanning segment. Over 73-87 (EAYLVYTDRLYSRSN) the chain is Cytoplasmic. The helical transmembrane segment at 88–108 (FNNYVAAIYKVLGTFLFGAAV) threads the bilayer. Over 109 to 161 (SQSLTDLAKYMIGRLRPSFLAVCDPDWSQVNCSGYVQLEVCRGSPANVTEARL) the chain is Lumenal. The interval 117–125 (KYMIGRLRP) is phosphatase sequence motif I. N-linked (GlcNAc...) asparagine glycans are attached at residues Asn139 and Asn155. The chain crosses the membrane as a helical span at residues 162–182 (SFYSGHSSFGMYCMLFLALYV). Residues 164–167 (YSGH) are phosphatase sequence motif II. The active-site Proton donors is His167. The Cytoplasmic segment spans residues 183-189 (QARLCWK). The chain crosses the membrane as a helical span at residues 190-210 (WARLLRPTVQFFLVAFAIYVG). The Lumenal portion of the chain corresponds to 211–218 (YTRVSDHK). Residues 212–223 (TRVSDHKHHWSD) form a phosphatase sequence motif III region. The active-site Nucleophile is the His219. Residues 219-239 (HHWSDVLVGLLQGALVACLTV) traverse the membrane as a helical segment. At 240-276 (RYVSDFFKSRPPQPCQEDEVPERKPSLSLTLTLGDRP) the chain is on the cytoplasmic side. Residues 251-276 (PQPCQEDEVPERKPSLSLTLTLGDRP) form a disordered region.

This sequence belongs to the PA-phosphatase related phosphoesterase family. As to quaternary structure, forms functional homodimers and homooligomers. Can also form heterooligomers with PLPP1 and PLPP3. In terms of processing, N-glycosylated. Expressed at high levels in lung, liver and kidney; at low levels in heart and brain, and was not detected in skeletal muscle.

It localises to the membrane. Its subcellular location is the cell membrane. The protein resides in the early endosome membrane. The protein localises to the endoplasmic reticulum membrane. The catalysed reaction is a 1,2-diacyl-sn-glycero-3-phosphate + H2O = a 1,2-diacyl-sn-glycerol + phosphate. The enzyme catalyses 1,2-dihexadecanoyl-sn-glycero-3-phosphate + H2O = 1,2-dihexadecanoyl-sn-glycerol + phosphate. It catalyses the reaction 1,2-di-(9Z-octadecenoyl)-sn-glycero-3-phosphate + H2O = 1,2-di-(9Z-octadecenoyl)-sn-glycerol + phosphate. It carries out the reaction a monoacyl-sn-glycero-3-phosphate + H2O = a monoacylglycerol + phosphate. The catalysed reaction is (9Z)-octadecenoyl-sn-glycero-3-phosphate + H2O = (9Z-octadecenoyl)-glycerol + phosphate. The enzyme catalyses sphing-4-enine 1-phosphate + H2O = sphing-4-enine + phosphate. It catalyses the reaction an N-acylsphing-4-enine 1-phosphate + H2O = an N-acylsphing-4-enine + phosphate. It carries out the reaction N-(octanoyl)-sphing-4-enine-1-phosphate + H2O = N-octanoylsphing-4-enine + phosphate. The catalysed reaction is N-(9Z-octadecenoyl)-ethanolamine phosphate + H2O = N-(9Z-octadecenoyl) ethanolamine + phosphate. The protein operates within lipid metabolism; phospholipid metabolism. Magnesium-independent phospholipid phosphatase. Insensitive to N-ethylmaleimide. In terms of biological role, magnesium-independent phospholipid phosphatase that catalyzes the dephosphorylation of a variety of glycerolipid and sphingolipid phosphate esters including phosphatidate/PA, lysophosphatidate/LPA, sphingosine 1-phosphate/S1P and ceramide 1-phosphate/C1P. Has no apparent extracellular phosphatase activity and therefore most probably acts intracellularly. Also acts on N-oleoyl ethanolamine phosphate/N-(9Z-octadecenoyl)-ethanolamine phosphate, a potential physiological compound. Through dephosphorylation of these bioactive lipid mediators produces new bioactive compounds and may regulate signal transduction in different cellular processes. Indirectly regulates, for instance, cell cycle G1/S phase transition through its phospholipid phosphatase activity. The sequence is that of Phospholipid phosphatase 2 from Mus musculus (Mouse).